The sequence spans 623 residues: F-box protein FBX14 (623 aa).

The disordered stretch occupies residues 18 to 48 (LNLNPPCSSSSSSSSAATFTNKSRNFKSSPP). A compositionally biased stretch (polar residues) spans 33-45 (AATFTNKSRNFKS). In terms of domain architecture, F-box spans 54 to 97 (VLENVLENVLQFLTSRCDRNAVSLVCRSWYRVEAQTRLEVFIGN). A 1D-myo-inositol hexakisphosphate-binding site is contributed by lysine 119. The interaction with auxin-responsive proteins stretch occupies residues 126–127 (DF). Residues 158-159 (KR) and arginine 391 contribute to the 1D-myo-inositol hexakisphosphate site. The interaction with auxin-responsive proteins stretch occupies residues 394 to 399 (PFDPRE). Residue 447 to 449 (VFR) coordinates 1D-myo-inositol hexakisphosphate. Positions 451–455 (CIMGR) are interaction with auxin-responsive proteins. Arginine 482 lines the 1D-myo-inositol hexakisphosphate pocket. Positions 510–511 (AF) are interaction with auxin-responsive proteins. 1D-myo-inositol hexakisphosphate-binding positions include 530-531 (QK) and arginine 555.

Part of a SCF (SKP1-cullin-F-box) protein ligase complex. May interact with auxin and auxin-responsive proteins.

It localises to the nucleus. Its pathway is protein modification; protein ubiquitination. The sequence is that of F-box protein FBX14 (FBX14) from Arabidopsis thaliana (Mouse-ear cress).